We begin with the raw amino-acid sequence, 369 residues long: MEILMTVSKLASICTMGANASALEKEIGPEQFPVNEHYFGLVNFGNTCYCNSVLQALYFCRPFREKVLAYKSQPRKKESLLTCLADLFHSIATQKKKVGVIPPKKFITRLRKENELFDNYMQQDAHEFLNYLLNTIADILQEERKQEKQNGRLPNGNIDSENNSTPDPTWVHEIFQGTLTNETRCLTCETISSKDEDFLDLSVDVEQNTSITHCLRGFSNTETLCSEYKYYCEECRSKQEAHKRMKVKKLPMILALHLKRFKYMDQLHRYTKLSYRVVFPLELRLFNTSGDATNPDRMYDLVAVVVHCGSGPNRGHYIAIVKSHDFWLLFDDDIVEKIDAQAIEEFYGLTSDISKNSESGYILFYQSRD.

Residues M1–L4 carry the Required for plasma membrane localization of USP12/WDR20 motif. In terms of domain architecture, USP spans F39–R368. Catalysis depends on C48, which acts as the Nucleophile. Positions K145–T165 are disordered. Residues C185, C188, C232, and C235 each coordinate Zn(2+). H316 (proton acceptor) is an active-site residue.

It belongs to the peptidase C19 family. USP12/USP46 subfamily. As to quaternary structure, interacts with WDR48. Interacts with WDR20; this interaction promotes translocation of the USP12 complex to the plasma membrane. Component of the USP12/WDR20/WDR48 deubiquitinating complex. Component of the USP12/WDR20/WDR48 deubiquitinating complex. Interacts with PHLPP1. Interacts with RBPJ. Interacts with CBP; this interaction blocks the acetyltransferase activity of CREBBP.

The protein resides in the nucleus. It localises to the cytoplasm. The protein localises to the cell membrane. The enzyme catalyses Thiol-dependent hydrolysis of ester, thioester, amide, peptide and isopeptide bonds formed by the C-terminal Gly of ubiquitin (a 76-residue protein attached to proteins as an intracellular targeting signal).. Its activity is regulated as follows. Activated by interaction with WDR20, WDR48 and DMWD through different allosteric mechanisms. In terms of biological role, deubiquitinating enzyme that plays various roles in the regulation of the immune response and inflammation. During TCR engagement and activation, translocates into the cytoplasm and deubiquitinates its substrates LAT and TRAT1 and prevents their lysosome-dependent degradation to stabilize the TCR signaling complex at the plasma membrane. Plays an essential role in the selective LPS-induced macrophage response through the activation of NF-kappa-B pathway. In addition, promotes that antiviral immune response through targeting DNA sensor IFI16 to inhibit its proteasome-dependent degradation. Participates in the interferon signaling pathway and antiviral response independently of its deubiquitinase activity by maintaining nuclear phosphorylated STAT1 levels via inhibition of its CREBBP-mediated acetylation and subsequent dephosphorylation. Plays an intrinsic role in promoting the differentiation, activation and proliferation of CD4(+) T-cell by activating the NF-kappa-B signaling pathway through deubiquitinating and stabilizing B-cell lymphoma/leukemia 10/BCL10. In myeloid-derived suppressor cells promotes the activation of the NF-kappa-B via deubiquitination and stabilization of RELA. Regulates the 'Lys-63'-linked polyubiquitin chains of BAX and thereby modulates the mitochondrial apoptotic process. Negative regulator of NOTCH signaling that specifically deubiquitinates non-activated NOTCH receptors to target them for lysosomal degradation; deubiquitination of NOTCH stimulates its transport form late endosomes to lysosomes. Protects neurons against HTT/huntingtin-induced polyglutamine expansion-dependent neurodegeneration through regulation of autophagic flux. This function is independent of deubiquitinase activity or of other components of the USP12-WDR20-WDR48 deubiquitinating complex. In complex with WDR48, acts as a potential tumor suppressor by positively regulating PHLPP1 stability. The protein is Ubiquitin carboxyl-terminal hydrolase 12 (USP12) of Bos taurus (Bovine).